We begin with the raw amino-acid sequence, 205 residues long: Latherin (205 aa).

Residues C133 and C176 are joined by a disulfide bond.

Belongs to the BPI/LBP/Plunc superfamily. Plunc family. In terms of assembly, monomer.

It localises to the secreted. Its function is as follows. Major protein in sweat, has surfactant properties. The polypeptide is Latherin (LATH) (Equus quagga burchellii (Burchell's zebra)).